The chain runs to 200 residues: Holliday junction branch migration complex subunit RuvA (200 aa).

Positions Met1 to Ala63 are domain I. Residues Thr64 to Phe142 are domain II. The interval Thr143 to Ser151 is flexible linker. The tract at residues Ser151–Arg200 is domain III.

Belongs to the RuvA family. Homotetramer. Forms an RuvA(8)-RuvB(12)-Holliday junction (HJ) complex. HJ DNA is sandwiched between 2 RuvA tetramers; dsDNA enters through RuvA and exits via RuvB. An RuvB hexamer assembles on each DNA strand where it exits the tetramer. Each RuvB hexamer is contacted by two RuvA subunits (via domain III) on 2 adjacent RuvB subunits; this complex drives branch migration. In the full resolvosome a probable DNA-RuvA(4)-RuvB(12)-RuvC(2) complex forms which resolves the HJ.

It is found in the cytoplasm. The RuvA-RuvB-RuvC complex processes Holliday junction (HJ) DNA during genetic recombination and DNA repair, while the RuvA-RuvB complex plays an important role in the rescue of blocked DNA replication forks via replication fork reversal (RFR). RuvA specifically binds to HJ cruciform DNA, conferring on it an open structure. The RuvB hexamer acts as an ATP-dependent pump, pulling dsDNA into and through the RuvAB complex. HJ branch migration allows RuvC to scan DNA until it finds its consensus sequence, where it cleaves and resolves the cruciform DNA. This chain is Holliday junction branch migration complex subunit RuvA, found in Limosilactobacillus fermentum (strain NBRC 3956 / LMG 18251) (Lactobacillus fermentum).